The following is a 189-amino-acid chain: Chitin synthase 2 (189 aa).

The protein belongs to the chitin synthase family. Class II subfamily.

It localises to the cell membrane. It catalyses the reaction [(1-&gt;4)-N-acetyl-beta-D-glucosaminyl](n) + UDP-N-acetyl-alpha-D-glucosamine = [(1-&gt;4)-N-acetyl-beta-D-glucosaminyl](n+1) + UDP + H(+). Polymerizes chitin, a structural polymer of the cell wall and septum, by transferring the sugar moiety of UDP-GlcNAc to the non-reducing end of the growing chitin polymer. The sequence is that of Chitin synthase 2 (chs2) from Aspergillus niger.